Here is a 193-residue protein sequence, read N- to C-terminus: Acyl carrier protein phosphodiesterase (193 aa).

It belongs to the AcpH family.

It catalyses the reaction holo-[ACP] + H2O = apo-[ACP] + (R)-4'-phosphopantetheine + H(+). Functionally, converts holo-ACP to apo-ACP by hydrolytic cleavage of the phosphopantetheine prosthetic group from ACP. This Enterobacter sp. (strain 638) protein is Acyl carrier protein phosphodiesterase.